The sequence spans 85 residues: Large ribosomal subunit protein bL27 (85 aa).

Belongs to the bacterial ribosomal protein bL27 family.

This Pseudomonas fluorescens (strain ATCC BAA-477 / NRRL B-23932 / Pf-5) protein is Large ribosomal subunit protein bL27.